The primary structure comprises 66 residues: Large ribosomal subunit protein bL35 (66 aa).

Positions 1 to 16 (MPKMKTHRGAAKRVKR) are enriched in basic residues. Positions 1 to 28 (MPKMKTHRGAAKRVKRTGSGQLKRSRAF) are disordered.

Belongs to the bacterial ribosomal protein bL35 family.

This chain is Large ribosomal subunit protein bL35, found in Staphylococcus epidermidis (strain ATCC 35984 / DSM 28319 / BCRC 17069 / CCUG 31568 / BM 3577 / RP62A).